Reading from the N-terminus, the 363-residue chain is Flagellar P-ring protein (363 aa).

An N-terminal signal peptide occupies residues 1 to 20 (MKLKLILAVAMLAFSLPSQA).

Belongs to the FlgI family. The basal body constitutes a major portion of the flagellar organelle and consists of four rings (L,P,S, and M) mounted on a central rod.

It is found in the periplasm. The protein resides in the bacterial flagellum basal body. In terms of biological role, assembles around the rod to form the L-ring and probably protects the motor/basal body from shearing forces during rotation. This is Flagellar P-ring protein from Shewanella sp. (strain MR-4).